We begin with the raw amino-acid sequence, 4490 residues long: Dynein axonemal heavy chain 8 (4490 aa).

Position 674 is a phosphoserine (serine 674). 4 AAA regions span residues 1808–2030 (YQNE…VLRT), 2090–2309 (NAVA…KLNL), 2416–2669 (YYPT…IWQG), and 2780–3034 (QFNE…YRRR). Residues 1846 to 1853 (GPAGTGKT) and 2128 to 2135 (GPSGSGKT) each bind ATP. Positions 3049–3346 (YKNIYAEKVK…MDLLNDADTC (298 aa)) are stalk. 3 coiled-coil regions span residues 3072 to 3164 (DKLM…ALNT), 3290 to 3354 (LKAN…QAAS), and 3594 to 3630 (RRVILTEKQELEAERVKLLEDVTFNKRKMKELEDNLL). AAA regions lie at residues 3432–3662 (LVDP…EVSE) and 3877–4091 (ARKY…FIQN).

It belongs to the dynein heavy chain family. As to quaternary structure, consists of at least two heavy chains and a number of intermediate and light chains. As to expression, expressed in spermatozoa (at protein level). Not detected in airway epithelial cells (at protein level).

It localises to the cytoplasm. The protein resides in the cytoskeleton. It is found in the flagellum axoneme. In terms of biological role, force generating protein component of the outer dynein arms (ODAs) in the sperm flagellum. Produces force towards the minus ends of microtubules. Dynein has ATPase activity; the force-producing power stroke is thought to occur on release of ADP. Involved in sperm motility; implicated in sperm flagellar assembly. The protein is Dynein axonemal heavy chain 8 of Homo sapiens (Human).